A 369-amino-acid polypeptide reads, in one-letter code: UDP-N-acetylglucosamine--N-acetylmuramyl-(pentapeptide) pyrophosphoryl-undecaprenol N-acetylglucosamine transferase (369 aa).

UDP-N-acetyl-alpha-D-glucosamine-binding positions include 16–18, Asn-130, Arg-171, Ser-196, and Gln-297; that span reads TGG.

This sequence belongs to the glycosyltransferase 28 family. MurG subfamily.

Its subcellular location is the cell inner membrane. It carries out the reaction di-trans,octa-cis-undecaprenyl diphospho-N-acetyl-alpha-D-muramoyl-L-alanyl-D-glutamyl-meso-2,6-diaminopimeloyl-D-alanyl-D-alanine + UDP-N-acetyl-alpha-D-glucosamine = di-trans,octa-cis-undecaprenyl diphospho-[N-acetyl-alpha-D-glucosaminyl-(1-&gt;4)]-N-acetyl-alpha-D-muramoyl-L-alanyl-D-glutamyl-meso-2,6-diaminopimeloyl-D-alanyl-D-alanine + UDP + H(+). It functions in the pathway cell wall biogenesis; peptidoglycan biosynthesis. Functionally, cell wall formation. Catalyzes the transfer of a GlcNAc subunit on undecaprenyl-pyrophosphoryl-MurNAc-pentapeptide (lipid intermediate I) to form undecaprenyl-pyrophosphoryl-MurNAc-(pentapeptide)GlcNAc (lipid intermediate II). The protein is UDP-N-acetylglucosamine--N-acetylmuramyl-(pentapeptide) pyrophosphoryl-undecaprenol N-acetylglucosamine transferase of Desulfotalea psychrophila (strain LSv54 / DSM 12343).